Reading from the N-terminus, the 542-residue chain is Chaperonin GroEL (542 aa).

ATP contacts are provided by residues 29–32 (TMGP), 86–90 (DGTTT), glycine 413, 476–478 (NAA), and aspartate 492. Positions 521-542 (KPDPNANNQAPAAPQGGMGGMM) are disordered. Low complexity predominate over residues 524–535 (PNANNQAPAAPQ).

It belongs to the chaperonin (HSP60) family. Forms a cylinder of 14 subunits composed of two heptameric rings stacked back-to-back. Interacts with the co-chaperonin GroES.

The protein localises to the cytoplasm. It carries out the reaction ATP + H2O + a folded polypeptide = ADP + phosphate + an unfolded polypeptide.. Its function is as follows. Together with its co-chaperonin GroES, plays an essential role in assisting protein folding. The GroEL-GroES system forms a nano-cage that allows encapsulation of the non-native substrate proteins and provides a physical environment optimized to promote and accelerate protein folding. The sequence is that of Chaperonin GroEL from Limosilactobacillus reuteri subsp. reuteri (strain JCM 1112) (Lactobacillus reuteri).